Here is a 989-residue protein sequence, read N- to C-terminus: Cellulose synthase A catalytic subunit 4 [UDP-forming] (989 aa).

At 1 to 184 (MMESGVPPCA…SRIIPISKNK (184 aa)) the chain is on the cytoplasmic side. Positions 9, 12, 20, 23, 28, 31, 43, and 46 each coordinate Zn(2+). The RING-type; degenerate zinc finger occupies 9–47 (CAACGDDAHAACRACSYALCKACLDEDAAEGRTTCARCG). The segment covering 138 to 149 (KKEKKASAKKAA) has biased composition (basic residues). The segment at 138-158 (KKEKKASAKKAAAKAQAPPVE) is disordered. A helical transmembrane segment spans residues 185-205 (LTPYRAVIIMRLVVLGLFFHY). At 206-213 (RITNPVYS) the chain is on the extracellular side. A helical membrane pass occupies residues 214–234 (AFGLWMTSVICEIWFGFSWIL). The Cytoplasmic portion of the chain corresponds to 235–772 (DQFPKWCPIN…INTIVYPFTS (538 aa)). The UDP-alpha-D-glucose site is built by serine 272, lysine 278, glutamate 279, and aspartate 308. The active site involves aspartate 308. Positions 362–389 (VKERRAMKRDYEEYKVRINALVAKAQKT) form a coiled coil. Lysine 449 lines the UDP-alpha-D-glucose pocket. Residues lysine 450 and aspartate 474 each coordinate Mn(2+). Aspartate 688 is a catalytic residue. A helical transmembrane segment spans residues 773–793 (LPLIAYCCLPAICLLTGKFII). The Extracellular segment spans residues 794 to 798 (PTLSN). The chain crosses the membrane as a helical span at residues 799–819 (AATIWFLGLFISIIVTSVLEL). The Cytoplasmic portion of the chain corresponds to 820-835 (RWSGIGIEDWWRNEQF). Residues 836–856 (WVIGGVSAHLFAVFQGILKMI) form a helical membrane-spanning segment. Residues 857 to 884 (AGLDTNFTVTAKATDDTEFGELYVFKWT) are Extracellular-facing. An N-linked (GlcNAc...) asparagine glycan is attached at asparagine 862. The helical transmembrane segment at 885–905 (TVLIPPTSILVLNLVGVVAGF) threads the bilayer. Topologically, residues 906-916 (SDALNSGYESW) are cytoplasmic. Residues 917–937 (GPLFGKVFFAMWVIMHLYPFL) traverse the membrane as a helical segment. At 938–946 (KGLMGRQNR) the chain is on the extracellular side. A helical transmembrane segment spans residues 947-967 (TPTIVVLWSVLLASVFSLLWV). Over 968 to 989 (KIDPFIGSSETTTTNSCANFDC) the chain is Cytoplasmic.

Belongs to the glycosyltransferase 2 family. Plant cellulose synthase subfamily. Mn(2+) is required as a cofactor. Requires Zn(2+) as cofactor.

The protein resides in the cell membrane. The enzyme catalyses [(1-&gt;4)-beta-D-glucosyl](n) + UDP-alpha-D-glucose = [(1-&gt;4)-beta-D-glucosyl](n+1) + UDP + H(+). It functions in the pathway glycan metabolism; plant cellulose biosynthesis. Its function is as follows. Catalytic subunit of cellulose synthase terminal complexes ('rosettes'), required for beta-1,4-glucan microfibril crystallization, a major mechanism of the cell wall formation. Involved in the secondary cell wall formation. The sequence is that of Cellulose synthase A catalytic subunit 4 [UDP-forming] (CESA4) from Oryza sativa subsp. japonica (Rice).